The sequence spans 413 residues: Falstatin (413 aa).

The N-terminal stretch at 1 to 21 (MNLLVFFCFFLLSCIVHLSRC) is a signal peptide. A BC loop; binds and inhibits the active site cavity of cysteine proteases motif is present at residues 284 to 294 (LDSVNGNGFVW). 2 stretches are compositionally biased toward polar residues: residues 325 to 339 (ISVT…NSNT) and 346 to 360 (NNKQ…TTNH). The tract at residues 325 to 367 (ISVTNPVPIPKNSNTNKDDSINNKQDGSQNNTTTNHFPKPREQ) is disordered.

It belongs to the protease inhibitor I71 family. Oligomer; probably composed of 10 monomers. Post-translationally, proteolytically cleaved.

It is found in the secreted. It localises to the cytoplasmic vesicle. Its subcellular location is the secretory vesicle. The protein resides in the microneme. The protein localises to the parasitophorous vacuole lumen. It is found in the host cytoplasm. In terms of biological role, cysteine protease inhibitor. Inhibits cysteine protease falcipains FP2 and FP3. Required for the invasion of host erythrocytes by merozoites. In the mosquito vector, essential for the gliding motility of hemocoel sporozoites and, therefore, for salivary gland invasion and the subsequent transmission from the mosquito to the mammalian host. Required for the invasion of host hepatocytes. During the liver stage, may prevent host hepatocyte cell death likely by inhibiting host cysteine proteases. This is Falstatin from Plasmodium falciparum (isolate 3D7).